The chain runs to 440 residues: Beta-1,3-galactosyl-O-glycosyl-glycoprotein beta-1,6-N-acetylglucosaminyltransferase (440 aa).

Topologically, residues 1-9 (MKMAGWKKK) are cytoplasmic. A helical; Signal-anchor for type II membrane protein transmembrane segment spans residues 10–30 (LCPGHHLWALGCYMLLAVVSL). Over 31–440 (RLSLRFKCDV…RHKAIYGTEL (410 aa)) the chain is Lumenal. N-linked (GlcNAc...) asparagine; by host glycosylation is found at N72 and N108. Cystine bridges form between C73–C230, C164–C384, C185–C212, and C393–C425.

The protein belongs to the glycosyltransferase 14 family.

The protein resides in the host Golgi apparatus membrane. The enzyme catalyses a 3-O-[beta-D-galactosyl-(1-&gt;3)-N-acetyl-alpha-D-galactosaminyl]-L-seryl-[protein] + UDP-N-acetyl-alpha-D-glucosamine = 3-O-{beta-D-galactosyl-(1-&gt;3)-[N-acetyl-beta-D-glucosaminyl-(1-&gt;6)]-N-acetyl-alpha-D-galactosaminyl}-L-seryl-[protein] + UDP + H(+). It carries out the reaction a 3-O-[beta-D-galactosyl-(1-&gt;3)-N-acetyl-alpha-D-galactosaminyl]-L-threonyl-[protein] + UDP-N-acetyl-alpha-D-glucosamine = a 3-O-{beta-D-galactosyl-(1-&gt;3)-[N-acetyl-beta-D-glucosaminyl-(1-&gt;6)]-N-acetyl-alpha-D-galactosaminyl}-L-threonyl-[protein] + UDP + H(+). It catalyses the reaction a beta-D-Gal-(1-&gt;4)-beta-D-GlcNAc-(1-&gt;3)-beta-D-Gal-(1-&gt;4)-beta-D-GlcNAc derivative + UDP-N-acetyl-alpha-D-glucosamine = a beta-D-Gal-(1-&gt;4)-beta-D-GlcNAc-(1-&gt;3)-[beta-D-GlcNAc-(1-&gt;6)]-beta-D-Gal-(1-&gt;4)-N-acetyl-beta-D-glucosaminyl derivative + UDP + H(+). The catalysed reaction is 3-O-[N-acetyl-beta-D-glucosaminyl-(1-&gt;3)-N-acetyl-alpha-D-galactosaminyl]-L-seryl-[protein] + UDP-N-acetyl-alpha-D-glucosamine = 3-O-[N-acetyl-beta-D-glucosaminyl-(1-&gt;3)-[N-acetyl-beta-D-glucosaminyl-(1-&gt;6)]-N-acetyl-alpha-D-galactosaminyl]-L-seryl-[protein] + UDP + H(+). The enzyme catalyses a 3-O-[N-acetyl-beta-D-glucosaminyl-(1-&gt;3)-N-acetyl-alpha-D-galactosaminyl]-L-threonyl-[protein] + UDP-N-acetyl-alpha-D-glucosamine = 3-O-[N-acetyl-beta-D-glucosaminyl-(1-&gt;3)-[N-acetyl-beta-D-glucosaminyl-(1-&gt;6)]-N-acetyl-alpha-D-galactosaminyl]-L-threonyl-[protein] + UDP + H(+). The protein operates within protein modification; protein glycosylation. In terms of biological role, non-essential glycosyltransferase that can synthesize all known mucin beta 6 N-acetylglucosaminides. Mediates core 2 and core 4 O-glycan branching, 2 important steps in mucin-type biosynthesis. Has also I-branching enzyme activity by converting linear into branched poly-N-acetyllactosaminoglycans. Contributes to the post-translational modifications of structural proteins. In Bovine herpesvirus 4 (strain V. test) (BoHV-4), this protein is Beta-1,3-galactosyl-O-glycosyl-glycoprotein beta-1,6-N-acetylglucosaminyltransferase (Bo17).